Consider the following 386-residue polypeptide: DNA dC-&gt;dU-editing enzyme APOBEC-3D (386 aa).

2 CMP/dCMP-type deaminase domains span residues 29–145 (GRSY…DWRW) and 187–334 (DDNY…LCSL). His78, Cys109, Cys112, and His262 together coordinate Zn(2+). Glu264 functions as the Proton donor in the catalytic mechanism. Cys293 and Cys296 together coordinate Zn(2+).

The protein belongs to the cytidine and deoxycytidylate deaminase family. Can form homo- and heterodimers with APOBEC3F and APOBEC3G. Interacts with L1RE1; this interaction inhibits LINE-1 retrotransposition. As to quaternary structure, (Microbial infection) Interacts with HIV-1 Vif. This interaction triggers APOBEC3D polyubiquitylation and degradation by the 26S proteasome. It depends on Zn(2+) as a cofactor. As to expression, expressed in lymphoid organs. Also detected in non-lymphoid tissues including lung.

It localises to the cytoplasm. The protein localises to the P-body. The catalysed reaction is a 2'-deoxycytidine in single-stranded DNA + H2O + H(+) = a 2'-deoxyuridine in single-stranded DNA + NH4(+). (Microbial infection) Antiviral activity is neutralized by the HIV-1 virion infectivity factor (Vif), that prevents its incorporation into progeny virions by both inhibiting its translation and/or by inducing its ubiquitination and subsequent degradation by the 26S proteasome. Its function is as follows. DNA deaminase (cytidine deaminase) which acts as an inhibitor of retrovirus replication and retrotransposon mobility via deaminase-dependent and -independent mechanisms. Exhibits antiviral activity against HIV-1. After the penetration of retroviral nucleocapsids into target cells of infection and the initiation of reverse transcription, it can induce the conversion of cytosine to uracil in the minus-sense single-strand viral DNA, leading to G-to-A hypermutations in the subsequent plus-strand viral DNA. The resultant detrimental levels of mutations in the proviral genome, along with a deamination-independent mechanism that works prior to the proviral integration, together exert efficient antiretroviral effects in infected target cells. Selectively targets single-stranded DNA and does not deaminate double-stranded DNA or single- or double-stranded RNA. Also inhibits the mobility of LTR and non-LTR retrotransposons. Functionally, (Microbial infection) Enhances hepatitis B virus/HBV replication by excluding restriction factors APOBEC3F and APOBEC3G from HBV capsids. The protein is DNA dC-&gt;dU-editing enzyme APOBEC-3D of Homo sapiens (Human).